The chain runs to 172 residues: C-phycocyanin beta chain (172 aa).

Residue N72 is modified to N4-methylasparagine. Residues C82 and C153 each contribute to the (2R,3E)-phycocyanobilin site.

It belongs to the phycobiliprotein family. In terms of assembly, heterodimer of an alpha and a beta subunit, which further assembles into trimers and the trimers into hexamers. The basic functional unit of phycobiliproteins is a ring-shaped hexamer formed from two back-to-back trimers contacting via the alpha chain subunits. The trimers are composed of alpha/beta subunit heterodimers arranged around a three-fold axis of symmetry. The phycoerythrins also contain a gamma subunit which is located in the center of the hexamer. In terms of processing, contains two covalently linked bilin chromophores.

The protein resides in the plastid. It localises to the chloroplast thylakoid membrane. In terms of biological role, light-harvesting photosynthetic bile pigment-protein from the phycobiliprotein complex (phycobilisome, PBS). Phycocyanin is the major phycobiliprotein in the PBS rod. This chain is C-phycocyanin beta chain (cpcB), found in Rhodella violacea (Red alga).